The primary structure comprises 23 residues: SLLQFNKMIKFETRKNAIPFYAF.

The cofactor is Ca(2+). Contains 7 disulfide bonds. As to expression, expressed by the venom gland.

Its subcellular location is the secreted. It carries out the reaction a 1,2-diacyl-sn-glycero-3-phosphocholine + H2O = a 1-acyl-sn-glycero-3-phosphocholine + a fatty acid + H(+). Its function is as follows. Snake venom phospholipase A2 (PLA2) that shows presynaptic neurotoxicity. PLA2 catalyzes the calcium-dependent hydrolysis of the 2-acyl groups in 3-sn-phosphoglycerides. The protein is Basic phospholipase A2 CB2 of Crotalus durissus cumanensis (South American rattlesnake).